The sequence spans 607 residues: Aspartate--tRNA(Asp/Asn) ligase (607 aa).

Glu-176 contributes to the L-aspartate binding site. The segment at 200–203 (QQFK) is aspartate. The L-aspartate site is built by Arg-222 and His-456. 222-224 (RDE) serves as a coordination point for ATP. Glu-496 is a binding site for ATP. Residue Arg-503 coordinates L-aspartate. ATP is bound at residue 548–551 (GIDR).

Belongs to the class-II aminoacyl-tRNA synthetase family. Type 1 subfamily. In terms of assembly, homodimer.

The protein localises to the cytoplasm. The catalysed reaction is tRNA(Asx) + L-aspartate + ATP = L-aspartyl-tRNA(Asx) + AMP + diphosphate. Functionally, aspartyl-tRNA synthetase with relaxed tRNA specificity since it is able to aspartylate not only its cognate tRNA(Asp) but also tRNA(Asn). Reaction proceeds in two steps: L-aspartate is first activated by ATP to form Asp-AMP and then transferred to the acceptor end of tRNA(Asp/Asn). This Parvibaculum lavamentivorans (strain DS-1 / DSM 13023 / NCIMB 13966) protein is Aspartate--tRNA(Asp/Asn) ligase.